A 146-amino-acid polypeptide reads, in one-letter code: Large ribosomal subunit protein uL15 (146 aa).

Over residues 1–18 the composition is skewed to basic and acidic residues; the sequence is MKLHELKPSEGSRKERNR. The disordered stretch occupies residues 1-57; that stretch reads MKLHELKPSEGSRKERNRVGRGIGSGNGKTSGKGHKGQNARSGGGVRPGFEGGQMPL. Composition is skewed to gly residues over residues 21–31 and 42–52; these read RGIGSGNGKTS and SGGGVRPGFEG.

Belongs to the universal ribosomal protein uL15 family. In terms of assembly, part of the 50S ribosomal subunit.

Binds to the 23S rRNA. In Bacillus pumilus (strain SAFR-032), this protein is Large ribosomal subunit protein uL15.